The primary structure comprises 1172 residues: Short transient receptor potential channel 2 (1172 aa).

The span at 1–10 (MLMSRTDSKS) shows a compositional bias: basic and acidic residues. Disordered regions lie at residues 1 to 22 (MLMS…MFKD), 69 to 98 (VVDP…WLTN), 140 to 227 (SAAR…GGVQ), and 249 to 271 (ATCG…SESV). The Cytoplasmic segment spans residues 1 to 659 (MLMSRTDSKS…PKSQLGRLLK (659 aa)). Over residues 75-87 (PGSSGLNQNSTDV) the composition is skewed to polar residues. Residues 166 to 177 (ESAEPRAEEPNR) are compositionally biased toward basic and acidic residues. Residues 195 to 204 (SLSNSSSQPN) show a composition bias toward polar residues. The span at 206–218 (RTGRTRQRQHRPQ) shows a compositional bias: basic residues. The segment covering 261–270 (SPASLSSSES) has biased composition (low complexity). 3 ANK repeats span residues 301–330 (KFPP…DASG), 377–406 (QIHE…REKG), and 430–459 (PGVT…TIAR). A helical transmembrane segment spans residues 660–680 (IPVLKFLLHSASYLWFLIFLL). At 681–702 (GESLVMETQLSTFKGRSQSVWE) the chain is on the extracellular side. Residues 703–723 (TSLHMIWVTGFLWFECKEVWI) traverse the membrane as a helical segment. Residues 724-738 (EGLRSYLLDWWNFLD) lie on the Cytoplasmic side of the membrane. Residues 739–759 (VVILSLYLASFALRLLLAGLA) traverse the membrane as a helical segment. The Extracellular segment spans residues 760 to 789 (YMHCRDASDSTTCRYFTTAERSEWRTEDPQ). A helical transmembrane segment spans residues 790–810 (FLAEVLFAVTSMLSFTRLAYI). At 811-833 (LPAHESLGTLQISIGKMIDDMIR) the chain is on the cytoplasmic side. The chain crosses the membrane as a helical span at residues 834-854 (FMFILMIILTAFLCGLNNIYV). Over 855-899 (PYQESEKLGNFNETFQFLFWTMFGMEEHTVVDMPQFLVPEFVGRA) the chain is Extracellular. Residues 900–920 (MYGIFTIVMVIVLLNMLIAMI) traverse the membrane as a helical segment. The Cytoplasmic segment spans residues 921-1172 (TNSFQKIEDD…EGDLETKGES (252 aa)). The interval 1118-1172 (VSLGDGLDGTGEAGAPAPGEPGSSSSAHVLVHREQEAEGSGDLLLEGDLETKGES) is disordered. The span at 1130–1144 (AGAPAPGEPGSSSSA) shows a compositional bias: low complexity.

The protein belongs to the transient receptor (TC 1.A.4) family. STrpC subfamily. TRPC2 sub-subfamily. As to expression, isoform 3 is ubiquitously expressed at low levels. Isoform 4 is expressed exclusively in vomeronasal organ.

The protein localises to the membrane. Its function is as follows. Thought to form a receptor-activated non-selective calcium permeant cation channel. Probably is operated by a phosphatidylinositol second messenger system activated by receptor tyrosine kinases or G-protein coupled receptors. May also be activated by intracellular calcium store depletion. Plays a role in mediating responsivity to pheromones that elicit aggressive and mating behaviors. Required for response to the Esp1 pheromone which enhances female sexual receptive behavior and to the Esp22 pheromone which inhibits adult male mating behavior. This Mus musculus (Mouse) protein is Short transient receptor potential channel 2 (Trpc2).